Reading from the N-terminus, the 213-residue chain is UPF0329 protein ECU04_0110 (213 aa).

Belongs to the UPF0329 family.

This Encephalitozoon cuniculi (strain GB-M1) (Microsporidian parasite) protein is UPF0329 protein ECU04_0110.